A 247-amino-acid chain; its full sequence is MRLIQNMCTIAEYPAPGSTAADCCLGAAGRRLVKIAVVGASGVGKTALVVRFLTKRFIGDYERNAGNLYTRQVHIEGETLAIQVQDTPGIQVHENGLSCSEQLNRCIRWADAVVLVFSITDHKSYELISQLHQHVQQLHPGTRLPVVLVANKADLLHVKQVDPQLGLQLASMLGCSFYEVSVSENYNDVYNAFHVLCKEVSPKQQPSSTPEKRRTSLIPRPKSPNMQDLKRRFKQALSAKVRTVTSV.

A small GTPase-like region spans residues 28–245 (AGRRLVKIAV…ALSAKVRTVT (218 aa)). Residues 39–46 (GASGVGKT), 86–93 (DTPGIQVH), and 151–154 (NKAD) each bind GTP. The tract at residues 202 to 228 (PKQQPSSTPEKRRTSLIPRPKSPNMQD) is disordered.

This sequence belongs to the small GTPase superfamily. Ras family.

The enzyme catalyses GTP + H2O = GDP + phosphate + H(+). The polypeptide is Ras-like protein family member 11B (Mus musculus (Mouse)).